We begin with the raw amino-acid sequence, 420 residues long: Gamma-glutamyl phosphate reductase (420 aa).

This sequence belongs to the gamma-glutamyl phosphate reductase family.

It is found in the cytoplasm. The enzyme catalyses L-glutamate 5-semialdehyde + phosphate + NADP(+) = L-glutamyl 5-phosphate + NADPH + H(+). It functions in the pathway amino-acid biosynthesis; L-proline biosynthesis; L-glutamate 5-semialdehyde from L-glutamate: step 2/2. In terms of biological role, catalyzes the NADPH-dependent reduction of L-glutamate 5-phosphate into L-glutamate 5-semialdehyde and phosphate. The product spontaneously undergoes cyclization to form 1-pyrroline-5-carboxylate. This Oenococcus oeni (strain ATCC BAA-331 / PSU-1) protein is Gamma-glutamyl phosphate reductase.